Reading from the N-terminus, the 342-residue chain is Phosphate acyltransferase (342 aa).

It belongs to the PlsX family. In terms of assembly, homodimer. Probably interacts with PlsY.

It is found in the cytoplasm. It catalyses the reaction a fatty acyl-[ACP] + phosphate = an acyl phosphate + holo-[ACP]. It functions in the pathway lipid metabolism; phospholipid metabolism. Functionally, catalyzes the reversible formation of acyl-phosphate (acyl-PO(4)) from acyl-[acyl-carrier-protein] (acyl-ACP). This enzyme utilizes acyl-ACP as fatty acyl donor, but not acyl-CoA. The protein is Phosphate acyltransferase of Shewanella sp. (strain MR-4).